The primary structure comprises 31 residues: Potassium channel toxin alpha-KTx 5.5 (31 aa).

Disulfide bonds link Cys3/Cys21, Cys8/Cys26, and Cys12/Cys28. Residues 6–9 (RRCE) form a [R/K]XCQ motif region. His31 carries the histidine amide modification.

As to expression, expressed by the venom gland.

It localises to the secreted. In terms of biological role, blocks small conductance calcium-activated potassium channels. The chain is Potassium channel toxin alpha-KTx 5.5 from Hottentotta tamulus (Eastern Indian scorpion).